The sequence spans 92 residues: Progonadoliberin-1 (92 aa).

The N-terminal stretch at Met1–Gly23 is a signal peptide. Residue Gln24 is modified to Pyrrolidone carboxylic acid. The residue at position 33 (Gly33) is a Glycine amide.

This sequence belongs to the GnRH family. Post-translationally, the precursor is cleaved by ACE, which removes the Gly-Lys-Arg peptide at the C-terminus, leading to mature hormone. The mature form of Gonadoliberin-1 is also cleaved and degraded by ACE.

It localises to the secreted. In terms of biological role, stimulates the secretion of gonadotropins; it stimulates the secretion of both luteinizing and follicle-stimulating hormones. In Cavia porcellus (Guinea pig), this protein is Progonadoliberin-1 (GNRH1).